The chain runs to 386 residues: WD repeat-containing protein 89 (386 aa).

6 WD repeats span residues 21–65, 68–106, 111–155, 167–207, 213–253, and 318–357; these read KEPT…VIRE, GYPG…GKPV, GYPS…QDLS, THSD…EDDA, NSVS…TDEP, and GHAA…KTFT.

The protein is WD repeat-containing protein 89 (WDR89) of Bos taurus (Bovine).